Consider the following 329-residue polypeptide: uncharacterized protein (329 aa).

The next 2 helical transmembrane spans lie at 13-35 (IPVL…WATI) and 229-248 (VIPA…SVVY).

Its subcellular location is the cell membrane. This is an uncharacterized protein from Archaeoglobus fulgidus (strain ATCC 49558 / DSM 4304 / JCM 9628 / NBRC 100126 / VC-16).